Here is a 92-residue protein sequence, read N- to C-terminus: Cell division protein FtsB (92 aa).

The Cytoplasmic segment spans residues 1–3 (MKV). A helical membrane pass occupies residues 4 to 21 (VPILLFVLLAALQYRLWF). The Periplasmic segment spans residues 22–92 (GKNSIPEYVA…TFYRILPSEE (71 aa)). Residues 31 to 74 (AMEKSVAEQAEQNTELLQRNNLLKADIQDLKVGLEAVEERARNE) adopt a coiled-coil conformation.

The protein belongs to the FtsB family. Part of a complex composed of FtsB, FtsL and FtsQ.

The protein localises to the cell inner membrane. Essential cell division protein. May link together the upstream cell division proteins, which are predominantly cytoplasmic, with the downstream cell division proteins, which are predominantly periplasmic. This chain is Cell division protein FtsB, found in Pseudoalteromonas atlantica (strain T6c / ATCC BAA-1087).